We begin with the raw amino-acid sequence, 849 residues long: Protein translocase subunit SecA (849 aa).

Residues Gln85, 103–107 (GEGKT), and Asp493 contribute to the ATP site. Residues Cys832, Cys834, Cys843, and His844 each coordinate Zn(2+).

This sequence belongs to the SecA family. As to quaternary structure, monomer and homodimer. Part of the essential Sec protein translocation apparatus which comprises SecA, SecYEG and auxiliary proteins SecDF. Other proteins may also be involved. Requires Zn(2+) as cofactor.

It localises to the cell membrane. The protein localises to the cytoplasm. It catalyses the reaction ATP + H2O + cellular proteinSide 1 = ADP + phosphate + cellular proteinSide 2.. Functionally, part of the Sec protein translocase complex. Interacts with the SecYEG preprotein conducting channel. Has a central role in coupling the hydrolysis of ATP to the transfer of proteins into and across the cell membrane, serving as an ATP-driven molecular motor driving the stepwise translocation of polypeptide chains across the membrane. This chain is Protein translocase subunit SecA, found in Streptococcus thermophilus (strain ATCC BAA-250 / LMG 18311).